Here is a 671-residue protein sequence, read N- to C-terminus: cGMP-dependent protein kinase 1 (671 aa).

S2 is subject to N-acetylserine. Residues 2–59 (SELEEDFAKILMLKEERIKELEKRLSEKEEEIQELKRKLHKCQSVLPVPSTHIGPRTT) adopt a coiled-coil conformation. A required for dimerization region spans residues 2–102 (SELEEDFAKI…LIKEAILDND (101 aa)). The tract at residues 9-44 (AKILMLKEERIKELEKRLSEKEEEIQELKRKLHKCQ) is leucine-zipper. Residues 50–75 (PSTHIGPRTTRAQGISAEPQTYRSFH) are autoinhibitory domain. T59 is modified (phosphothreonine; by autocatalysis). Residues 103 to 220 (FMKNLELSQI…EYMEFLKSVP (118 aa)) form a cGMP-binding, high affinity region. 3',5'-cyclic GMP contacts are provided by residues 167-170 (GELA), 177-178 (RT), R282, 291-294 (GEKA), 301-302 (RT), and Y336. The segment at 221-341 (TFQSLPDEIL…SNKAYEDAEA (121 aa)) is cGMP-binding, low affinity. Residues 360–619 (FNIIDTLGVG…VKDIQKHKWF (260 aa)) form the Protein kinase domain. Residues 366 to 374 (LGVGGFGRV) and K390 contribute to the ATP site. The Proton acceptor role is filled by D484. T515 carries the post-translational modification Phosphothreonine. The AGC-kinase C-terminal domain occupies 620–671 (EGFNWEGLRKGTLTPPIIPSVASPTDTSNFDSFPEDSDEPPPDDNSGWDIDF). Residues 635–671 (PIIPSVASPTDTSNFDSFPEDSDEPPPDDNSGWDIDF) form a disordered region. Over residues 652–661 (FPEDSDEPPP) the composition is skewed to acidic residues.

This sequence belongs to the protein kinase superfamily. AGC Ser/Thr protein kinase family. cGMP subfamily. Isoform alpha: parallel homodimer or heterodimer and also heterotetramer. Interacts directly with PPP1R12A. Non-covalent dimer of dimer of PRKG1-PRKG1 and PPP1R12A-PPP1R12A. This interaction targets PRKG1 to stress fibers to mediate smooth muscle cell relaxation and vasodilation in responses to rises in cGMP. Isoform beta: antiparallel homodimer. Part of cGMP kinase signaling complex at least composed of ACTA2/alpha-actin, CNN1/calponin H1, PLN/phospholamban, PRKG1 and ITPR1. Interacts with IRAG1. Forms a stable complex with ITPR1, IRAG1, and isoform beta of PRKG1. Interacts with TRPC7 (via ankyrin repeat domain). Isoform alpha interacts with RGS2. Interacts with GTF2I. Autophosphorylation increases kinase activity. In terms of processing, 65 kDa monomer is produced by proteolytic cleavage. In terms of tissue distribution, detected in cerebellum, hippocampus, dorsomedial hypothalamus, medulla, subcommissural organ, cerebral cortex, amygdala, habenulae, various hypothalamic regions, olfactory bulb, pituitary gland, and retina. Isoform alpha is prominent in the cerebellum and medulla, whereas isoform Beta is predominant in the cortex, hippocampus, hypothalamus, and olfactory bulb.

The protein resides in the cytoplasm. It catalyses the reaction L-seryl-[protein] + ATP = O-phospho-L-seryl-[protein] + ADP + H(+). It carries out the reaction L-threonyl-[protein] + ATP = O-phospho-L-threonyl-[protein] + ADP + H(+). With respect to regulation, in the absence of cGMP, PRKG1 activity is suppressed by autoinhibitory contacts. In terms of biological role, serine/threonine protein kinase that acts as a key mediator of the nitric oxide (NO)/cGMP signaling pathway. GMP binding activates PRKG1, which phosphorylates serines and threonines on many cellular proteins. Numerous protein targets for PRKG1 phosphorylation are implicated in modulating cellular calcium, but the contribution of each of these targets may vary substantially among cell types. Proteins that are phosphorylated by PRKG1 regulate platelet activation and adhesion, smooth muscle contraction, cardiac function, gene expression, feedback of the NO-signaling pathway, and other processes involved in several aspects of the CNS like axon guidance, hippocampal and cerebellar learning, circadian rhythm and nociception. Smooth muscle relaxation is mediated through lowering of intracellular free calcium, by desensitization of contractile proteins to calcium, and by decrease in the contractile state of smooth muscle or in platelet activation. Regulates intracellular calcium levels via several pathways: phosphorylates IRAG1 and inhibits IP3-induced Ca(2+) release from intracellular stores, phosphorylation of KCNMA1 (BKCa) channels decreases intracellular Ca(2+) levels, which leads to increased opening of this channel. PRKG1 phosphorylates the canonical transient receptor potential channel (TRPC) family which inactivates the associated inward calcium current. Another mode of action of NO/cGMP/PKGI signaling involves PKGI-mediated inactivation of the Ras homolog gene family member A (RhoA). Phosphorylation of RHOA by PRKG1 blocks the action of this protein in myriad processes: regulation of RHOA translocation; decreasing contraction; controlling vesicle trafficking, reduction of myosin light chain phosphorylation resulting in vasorelaxation. Activation of PRKG1 by NO signaling also alters gene expression in a number of tissues. In smooth muscle cells, increased cGMP and PRKG1 activity influence expression of smooth muscle-specific contractile proteins, levels of proteins in the NO/cGMP signaling pathway, down-regulation of the matrix proteins osteopontin and thrombospondin-1 to limit smooth muscle cell migration and phenotype. Regulates vasodilator-stimulated phosphoprotein (VASP) functions in platelets and smooth muscle. In Mus musculus (Mouse), this protein is cGMP-dependent protein kinase 1 (Prkg1).